An 868-amino-acid polypeptide reads, in one-letter code: MSKSLVIVESPAKAKTINKYLGSNYVVKSSVGHIRDLPTVGSSNGEKAKAISTKGLSAEEKSAIKQEKDRNALVKRMGIDPYHQWKANYQILPGKEKVVAELKSLAKKADHIYLATDLDREGEAIAWHLREVIGGDDARFSRVVFNEITKNAIQQAFEKPEQLNLDRVNAQQTRRFLDRVVGFMVSPLLWKKVARGLSAGRVQSVAVKLVVEREREIKAFQPEEYWEIDVLTQTQAKQALRLAVTQFKGKKFEPKNATQAQSAVDFLQHADYVVSDLETKPTHSRAKAPFITSTLQQTASTRLGFGVKKTMMLAQRLYEAGYITYMRTDSTNLSQDALKMVRGYIQSHYGESYLPSKPVFYSSKENAQEAHEAIRPSDVNTLAEQLTGMDKDAVRLYDLIWRQFVACQMPAAQYDSTTVTVRAGEYELKAKGRILRFDGWTKVLPTMSKNAEDQVLPDVQLNEKLHLEHVLPEQLFTKPPARFSEAALVKELEKRGIGRPSTYAAIISTIQERGYVRVENRRFYAEKMGEIVTDRLNQSFTALMNYDFTANMENILDQIANGEKNWKTELNQFFKDFSQQLSQAELDELEGGMKPNSLVPTDINCPTCGRKMAIRTASTGVFLGCSGYALPPKERCKTTMNLIPEAELLNVLDEASETKALMERKRCPKCGTAMDSYLIDPERKIHICGHNPNCDGYVLEQGSFKIKGYDGPIVECDKCGADMHLKLGRFGKYMGCTSCDNTRKILKSGEVAPPKEEPTHFPELKCEKSDAYFVLRDGASGVFMSAHNFPKSRETRAPKVAELALYRDRLPEKLRYLADAPQHDPEGNDAIVRFSRKEKRQYVTSEKNGKATKWIVDYLGNQWVERKK.

Residues 3 to 148 (KSLVIVESPA…RFSRVVFNEI (146 aa)) enclose the Toprim domain. 2 residues coordinate Mg(2+): Glu9 and Asp117. A Topo IA-type catalytic domain is found at 164 to 581 (NLDRVNAQQT…QFFKDFSQQL (418 aa)). The interval 198-203 (SAGRVQ) is interaction with DNA. The active-site O-(5'-phospho-DNA)-tyrosine intermediate is Tyr325. C4-type zinc fingers lie at residues 605 to 636 (CPTC…KERC), 667 to 694 (CPKC…NPNC), and 716 to 739 (CDKC…CTSC).

This sequence belongs to the type IA topoisomerase family. In terms of assembly, monomer. It depends on Mg(2+) as a cofactor.

It carries out the reaction ATP-independent breakage of single-stranded DNA, followed by passage and rejoining.. Releases the supercoiling and torsional tension of DNA, which is introduced during the DNA replication and transcription, by transiently cleaving and rejoining one strand of the DNA duplex. Introduces a single-strand break via transesterification at a target site in duplex DNA. The scissile phosphodiester is attacked by the catalytic tyrosine of the enzyme, resulting in the formation of a DNA-(5'-phosphotyrosyl)-enzyme intermediate and the expulsion of a 3'-OH DNA strand. The free DNA strand then undergoes passage around the unbroken strand, thus removing DNA supercoils. Finally, in the religation step, the DNA 3'-OH attacks the covalent intermediate to expel the active-site tyrosine and restore the DNA phosphodiester backbone. The protein is DNA topoisomerase 1 of Pasteurella multocida (strain Pm70).